A 153-amino-acid polypeptide reads, in one-letter code: Ribonuclease H (153 aa).

An RNase H type-1 domain is found at 1-141; that stretch reads MKHIEIYTDG…CDVLARDAAS (141 aa). The Mg(2+) site is built by Asp-9, Glu-47, Asp-69, and Asp-133.

It belongs to the RNase H family. Monomer. Requires Mg(2+) as cofactor.

It localises to the cytoplasm. The enzyme catalyses Endonucleolytic cleavage to 5'-phosphomonoester.. Functionally, endonuclease that specifically degrades the RNA of RNA-DNA hybrids. The protein is Ribonuclease H of Pseudoalteromonas atlantica (strain T6c / ATCC BAA-1087).